Reading from the N-terminus, the 88-residue chain is Small ribosomal subunit protein uS15c (88 aa).

Belongs to the universal ribosomal protein uS15 family. Part of the 30S ribosomal subunit.

It is found in the plastid. The protein resides in the chloroplast. This is Small ribosomal subunit protein uS15c (rps15) from Barbarea verna (Land cress).